Consider the following 969-residue polypeptide: RNA polymerase-associated protein RapA (969 aa).

The Helicase ATP-binding domain maps to 162-339 (EVGQRVAPRV…FARLALLDAD (178 aa)). Residue 175–182 (DEVGLGKT) coordinates ATP. The short motif at 285 to 288 (DEAH) is the DEAH box element. One can recognise a Helicase C-terminal domain in the interval 492-663 (RIEWLITFLK…GFLKNPQAVG (172 aa)).

It belongs to the SNF2/RAD54 helicase family. RapA subfamily. Interacts with the RNAP. Has a higher affinity for the core RNAP than for the holoenzyme. Its ATPase activity is stimulated by binding to RNAP.

Its function is as follows. Transcription regulator that activates transcription by stimulating RNA polymerase (RNAP) recycling in case of stress conditions such as supercoiled DNA or high salt concentrations. Probably acts by releasing the RNAP, when it is trapped or immobilized on tightly supercoiled DNA. Does not activate transcription on linear DNA. Probably not involved in DNA repair. The chain is RNA polymerase-associated protein RapA from Actinobacillus pleuropneumoniae serotype 5b (strain L20).